Here is a 210-residue protein sequence, read N- to C-terminus: Large ribosomal subunit protein bL25 (210 aa).

The segment at 186–210 (ISSASTEKEAESNQESTSTTPSSES) is disordered. Positions 198–210 (NQESTSTTPSSES) are enriched in low complexity.

Belongs to the bacterial ribosomal protein bL25 family. CTC subfamily. In terms of assembly, part of the 50S ribosomal subunit; part of the 5S rRNA/L5/L18/L25 subcomplex. Contacts the 5S rRNA. Binds to the 5S rRNA independently of L5 and L18.

In terms of biological role, this is one of the proteins that binds to the 5S RNA in the ribosome where it forms part of the central protuberance. In Ehrlichia chaffeensis (strain ATCC CRL-10679 / Arkansas), this protein is Large ribosomal subunit protein bL25.